Here is a 64-residue protein sequence, read N- to C-terminus: Large ribosomal subunit protein uL29 (64 aa).

It belongs to the universal ribosomal protein uL29 family.

The polypeptide is Large ribosomal subunit protein uL29 (Maridesulfovibrio salexigens (strain ATCC 14822 / DSM 2638 / NCIMB 8403 / VKM B-1763) (Desulfovibrio salexigens)).